The sequence spans 321 residues: Torsin-2A (321 aa).

Positions 1–26 (MAAATRSCRPWGSLLGLIWLVSAAAA) are cleaved as a signal peptide. ATP is bound at residue 93-100 (GWTGTGKS). An N-linked (GlcNAc...) asparagine glycan is attached at Asn149.

The protein belongs to the ClpA/ClpB family. Torsin subfamily. In terms of assembly, homohexamer. Interacts with TOR1AIP1.

The protein localises to the endoplasmic reticulum lumen. The sequence is that of Torsin-2A (TOR2A) from Bos taurus (Bovine).